The sequence spans 461 residues: uncharacterized protein (461 aa).

Residues 86–127 (KMKPNKDDDEEEDEDDEDDEDDEEEDNEEEDNEEENEITIAP) are disordered. Residues 92–122 (DDDEEEDEDDEDDEDDEEEDNEEEDNEEENE) show a composition bias toward acidic residues. Coiled-coil stretches lie at residues 95 to 123 (EEEDEDDEDDEDDEEEDNEEEDNEEENEI) and 405 to 459 (NKYI…KLKK).

The protein belongs to the mimivirus L5 family.

This is an uncharacterized protein from Acanthamoeba polyphaga mimivirus (APMV).